A 158-amino-acid chain; its full sequence is Ethylene-responsive transcription factor ERF120 (158 aa).

Positions 86–147 (KHKGVRKKPS…SARRGTKNGE (62 aa)) form a DNA-binding region, AP2/ERF. The disordered stretch occupies residues 134-158 (VGRRSARRGTKNGEEASTKKTTEKN). Over residues 144 to 158 (KNGEEASTKKTTEKN) the composition is skewed to basic and acidic residues.

The protein belongs to the AP2/ERF transcription factor family. ERF subfamily.

The protein resides in the nucleus. Probably acts as a transcriptional activator. Binds to the GCC-box pathogenesis-related promoter element. May be involved in the regulation of gene expression by stress factors and by components of stress signal transduction pathways. In Arabidopsis thaliana (Mouse-ear cress), this protein is Ethylene-responsive transcription factor ERF120 (ERF120).